A 645-amino-acid chain; its full sequence is Minor extracellular protease Epr (645 aa).

A signal peptide spans 1–27; that stretch reads MKNMSCKLVVSVTLFFSFLTIGPLAHA. The propeptide occupies 28–103; sequence QNSSEKEVIV…AADSTDFKVL (76 aa). In terms of domain architecture, Peptidase S8 spans 115–382; it reads QWNLEPIQVK…YGLIQYKAQA (268 aa). Catalysis depends on charge relay system residues Asp-142, His-172, and Ser-326. Disordered regions lie at residues 490-577 and 591-645; these read KQAK…KTAL and AEAK…KPKK. Basic and acidic residues predominate over residues 491 to 508; sequence QAKDKVAKAEKSKKKTDV. Polar residues predominate over residues 522 to 547; that stretch reads SEKTSLQKRLNKVKSTNLKTAQQSVS. The span at 592 to 610 shows a compositional bias: basic and acidic residues; that stretch reads EAKKVETAKAKVKKAEKDK.

It belongs to the peptidase S8 family. Post-translationally, may undergo two steps of processing in its passage through the cell membrane: removal of the N-terminal signal sequence and cleavage of the C-terminal domain. Several active forms of Epr with molecular masses between 40 and 34 kDa were found in the medium of B.subtilis cultures. The size variation of the active forms expressed by the complete epr gene appears to be the result of partial removal of the C-terminus either by processing or degradation.

It is found in the secreted. It localises to the cell wall. Its activity is regulated as follows. Requires Ca(2+) for stability. Activity is inhibited by phenylmethylsulfonyl fluoride (PMSF) and EDTA. In terms of biological role, serine protease. Involved in the production of the competence and sporulation stimulating factor CSF. In addition, is essential for swarming motility. Plays a key role in DegU-mediated swarming motility. The protease activity is dispensable for swarming. Not essential for growth or sporulation. The chain is Minor extracellular protease Epr from Bacillus subtilis (strain 168).